A 136-amino-acid chain; its full sequence is DNA-directed RNA polymerase subunit omega (136 aa).

A disordered region spans residues 79-107; sequence EPEAETVPLLSSSPAAAAVAPQSSSDDAA. Positions 89 to 107 are enriched in low complexity; that stretch reads SSSPAAAAVAPQSSSDDAA.

Belongs to the RNA polymerase subunit omega family. As to quaternary structure, the RNAP catalytic core consists of 2 alpha, 1 beta, 1 beta' and 1 omega subunit. When a sigma factor is associated with the core the holoenzyme is formed, which can initiate transcription.

The catalysed reaction is RNA(n) + a ribonucleoside 5'-triphosphate = RNA(n+1) + diphosphate. Promotes RNA polymerase assembly. Latches the N- and C-terminal regions of the beta' subunit thereby facilitating its interaction with the beta and alpha subunits. The polypeptide is DNA-directed RNA polymerase subunit omega (Methylobacterium radiotolerans (strain ATCC 27329 / DSM 1819 / JCM 2831 / NBRC 15690 / NCIMB 10815 / 0-1)).